Here is a 172-residue protein sequence, read N- to C-terminus: Galectin-related protein (172 aa).

A2 is modified (N-acetylalanine). Phosphoserine occurs at positions 22 and 25. Residues 39 to 168 (PFCGHIKGGM…TIKINGDLQI (130 aa)) form the Galectin domain.

In terms of assembly, monomer.

Does not bind lactose, and may not bind carbohydrates. The chain is Galectin-related protein (LGALSL) from Homo sapiens (Human).